A 307-amino-acid polypeptide reads, in one-letter code: MDSRGFDSEGREFSSATEMWAHEIGAAADAPVSAAVAEPAPAPAAGSNGVAGEEEAGGGGKREEWYSKAIAYWQGVEASTEGVLGGYGCVNDVDVKGSDAFLRPLLAERFGAARRHLVALDCGSGIGRVTKNFLLRHFNEVDLVEPVSHFLEAAQENLTECMEVGEDTHKAANFYCVPLQDFTPDEGRYDVIWIQWCIGQLPDDDFISFFNRAKIGLKPNGFFVLKENIARNGFVLDKEDNSITRSDAYFKELFKKCGLYIHSIKDQSDLPKELFAVKMYALVTEKPKIQKNGKRRRPKNSPRMIRS.

Over residues 38–51 (EPAPAPAAGSNGVA) the composition is skewed to low complexity. Positions 38-60 (EPAPAPAAGSNGVAGEEEAGGGG) are disordered. S-adenosyl-L-methionine-binding positions include glycine 123, arginine 128, 145–147 (EPV), 179–180 (LQ), and glutamine 195.

This sequence belongs to the methyltransferase superfamily. NTM1 family.

It catalyses the reaction N-terminal L-alanyl-L-prolyl-L-lysyl-[protein] + 3 S-adenosyl-L-methionine = N-terminal N,N,N-trimethyl-L-alanyl-L-prolyl-L-lysyl-[protein] + 3 S-adenosyl-L-homocysteine + 3 H(+). It carries out the reaction N-terminal L-seryl-L-prolyl-L-lysyl-[protein] + 3 S-adenosyl-L-methionine = N-terminal N,N,N-trimethyl-L-seryl-L-prolyl-L-lysyl-[protein] + 3 S-adenosyl-L-homocysteine + 3 H(+). The catalysed reaction is N-terminal L-prolyl-L-prolyl-L-lysyl-[protein] + 2 S-adenosyl-L-methionine = N-terminal N,N-dimethyl-L-prolyl-L-prolyl-L-lysyl-[protein] + 2 S-adenosyl-L-homocysteine + 2 H(+). Its function is as follows. Alpha-N-methyltransferase that methylates the N-terminus of target proteins containing the N-terminal motif [Ala/Pro/Ser]-Pro-Lys when the initiator Met is cleaved. Specifically catalyzes mono-, di- or tri-methylation of exposed alpha-amino group of Ala or Ser residue in the [Ala/Ser]-Pro-Lys motif and mono- or di-methylation of Pro in the Pro-Pro-Lys motif. The chain is Alpha N-terminal protein methyltransferase 1 from Oryza sativa subsp. japonica (Rice).